A 412-amino-acid polypeptide reads, in one-letter code: Alanyl-tRNA editing protein Aarsd1 (412 aa).

Zn(2+) is bound by residues H109 and H113. S174 is subject to Phosphoserine. Zn(2+)-binding residues include C209 and H213.

This sequence belongs to the class-II aminoacyl-tRNA synthetase family. Alax-L subfamily. Zn(2+) serves as cofactor.

The protein resides in the cytoplasm. Functionally, functions in trans to edit the amino acid moiety from incorrectly charged tRNA(Ala). The protein is Alanyl-tRNA editing protein Aarsd1 (Aarsd1) of Rattus norvegicus (Rat).